Reading from the N-terminus, the 86-residue chain is Arminin 7246 (86 aa).

The signal sequence occupies residues 1–18 (MRPEYAVLFLALIALTYA). Residues 19–57 (RSNEDVREEIKNEIEKDILEDLVEDEGELDDKAIDVNDA) constitute a propeptide that is removed on maturation. An Alanine amide modification is found at alanine 83.

This sequence belongs to the arminin family. In terms of tissue distribution, expressed in entodermal epithelium along the body column.

The protein resides in the secreted. Its subcellular location is the target cell membrane. Its function is as follows. Antimicrobial peptide with a broad-spectrum antimicrobial activity. Keeps its antibacterial activity under a wide range of salt concentrations that mimic physiological conditions of human blood, which is surprising, since Hydra is an obligate freshwater animal with nearly no salt tolerance. Does not affect red blood cells. This chain is Arminin 7246, found in Hydra viridissima (Green hydra).